The primary structure comprises 473 residues: Photosystem II CP43 reaction center protein (473 aa).

Positions 1–14 are excised as a propeptide; it reads MKILYSPRRFYPVE. An N-acetylthreonine modification is found at threonine 15. Threonine 15 bears the Phosphothreonine mark. 5 helical membrane passes run 69–93, 134–155, 178–200, 255–275, and 291–312; these read LFEV…PHLA, LIGP…KDKN, KALY…REIT, KPFA…LSYS, and WFNN…ASQA. Glutamate 367 is a [CaMn4O5] cluster binding site. The chain crosses the membrane as a helical span at residues 447–471; sequence RARAAAAGFEKGIDRDTEPVLSMTP.

Belongs to the PsbB/PsbC family. PsbC subfamily. As to quaternary structure, PSII is composed of 1 copy each of membrane proteins PsbA, PsbB, PsbC, PsbD, PsbE, PsbF, PsbH, PsbI, PsbJ, PsbK, PsbL, PsbM, PsbT, PsbX, PsbY, PsbZ, Psb30/Ycf12, at least 3 peripheral proteins of the oxygen-evolving complex and a large number of cofactors. It forms dimeric complexes. Requires Binds multiple chlorophylls and provides some of the ligands for the Ca-4Mn-5O cluster of the oxygen-evolving complex. It may also provide a ligand for a Cl- that is required for oxygen evolution. PSII binds additional chlorophylls, carotenoids and specific lipids. as cofactor.

The protein localises to the plastid. It is found in the chloroplast thylakoid membrane. One of the components of the core complex of photosystem II (PSII). It binds chlorophyll and helps catalyze the primary light-induced photochemical processes of PSII. PSII is a light-driven water:plastoquinone oxidoreductase, using light energy to abstract electrons from H(2)O, generating O(2) and a proton gradient subsequently used for ATP formation. The polypeptide is Photosystem II CP43 reaction center protein (Adiantum capillus-veneris (Maidenhair fern)).